Consider the following 479-residue polypeptide: 3-isopropylmalate dehydratase large subunit (479 aa).

[4Fe-4S] cluster-binding residues include Cys353, Cys414, and Cys417.

This sequence belongs to the aconitase/IPM isomerase family. LeuC type 1 subfamily. In terms of assembly, heterodimer of LeuC and LeuD. [4Fe-4S] cluster is required as a cofactor.

It catalyses the reaction (2R,3S)-3-isopropylmalate = (2S)-2-isopropylmalate. It participates in amino-acid biosynthesis; L-leucine biosynthesis; L-leucine from 3-methyl-2-oxobutanoate: step 2/4. Its function is as follows. Catalyzes the isomerization between 2-isopropylmalate and 3-isopropylmalate, via the formation of 2-isopropylmaleate. This is 3-isopropylmalate dehydratase large subunit from Xanthomonas campestris pv. campestris (strain 8004).